The chain runs to 179 residues: Gamma-glutamyl cyclotransferase verK (179 aa).

Belongs to the class-I pyridoxal-phosphate-dependent aminotransferase family.

The enzyme catalyses an alpha-(gamma-L-glutamyl)-L-amino acid = 5-oxo-L-proline + an L-alpha-amino acid. It participates in mycotoxin biosynthesis. In terms of biological role, gamma-glutamyl cyclotransferase; part of the gene cluster that mediates the biosynthesis of 11'-deoxyverticillin A, one of the dimeric epipolythiodioxopiperazines (ETPs) from the verticillin family that act as mycotoxins. 11'-deoxyverticillin A is required for normal conidiation. The nonribosomal peptide synthetase verP is speculated to be responsible for condensation of amino acids to form the carbon skeleton of verticillin, whereas the cluster-specific tailoring enzymes are involved in further modifications leading to the production of 11'-deoxyverticillin A. The polypeptide is Gamma-glutamyl cyclotransferase verK (Clonostachys rogersoniana).